Here is a 56-residue protein sequence, read N- to C-terminus: UPF0391 membrane protein Noc_0482 (56 aa).

2 helical membrane passes run M1–T21 and H29–G49.

Belongs to the UPF0391 family.

The protein resides in the cell membrane. The chain is UPF0391 membrane protein Noc_0482 from Nitrosococcus oceani (strain ATCC 19707 / BCRC 17464 / JCM 30415 / NCIMB 11848 / C-107).